A 778-amino-acid chain; its full sequence is High affinity nerve growth factor receptor (778 aa).

Positions 1-14 are cleaved as a signal peptide; that stretch reads WGCLRLPLPLCHAL. Over 15–400 the chain is Extracellular; it reads AAHCRCPASH…VETADEHTFG (386 aa). Residues cysteine 18 and cysteine 20 are joined by a disulfide bond. LRR repeat units lie at residues 71-92 and 95-116; these read DLRHLTISNSGLQYISDDAFQD and RLSHVNLSFNALTSLSWKTFQH. 11 N-linked (GlcNAc...) asparagine glycosylation sites follow: asparagine 100, asparagine 130, asparagine 143, asparagine 151, asparagine 194, asparagine 234, asparagine 262, asparagine 300, asparagine 320, asparagine 340, and asparagine 384. Residues 127–175 enclose the LRRCT domain; the sequence is NPFNCSCGIRWLQLWQNGSRAELGNQSLLCWEGSMLVALDSHPLHDCEP. A disulfide bridge links cysteine 133 with cysteine 173. 2 consecutive Ig-like C2-type domains span residues 175–262 and 281–347; these read PPTA…VMLN and WCIP…VVQN. Cysteine 282 and cysteine 327 form a disulfide bridge. Residues 401 to 421 traverse the membrane as a helical segment; sequence VSVAVALAVFASLFLSVMLIA. Topologically, residues 422 to 778 are cytoplasmic; the sequence is LNKCGHRSKF…TPPIYLDILG (357 aa). Tyrosine 479 carries the phosphotyrosine; by autocatalysis modification. Residues 493 to 763 enclose the Protein kinase domain; sequence IVLKWELGEG…RSIQDIHSRL (271 aa). Residues 499–507 and lysine 527 contribute to the ATP site; that span reads LGEGAFGKV. Aspartate 633 acts as the Proton acceptor in catalysis. Phosphotyrosine; by autocatalysis is present on residues tyrosine 659, tyrosine 663, tyrosine 664, and tyrosine 773.

The protein belongs to the protein kinase superfamily. Tyr protein kinase family. Insulin receptor subfamily. As to quaternary structure, exists in a dynamic equilibrium between monomeric (low affinity) and dimeric (high affinity) structures. Homodimerization is induced by NGF dimer binding. Interacts with PTPRS. Post-translationally, ligand-mediated auto-phosphorylation. In terms of processing, ubiquitinated. Undergoes polyubiquitination upon activation; regulated by NGFR. Ubiquitination regulates the internalization of the receptor.

The protein localises to the cell membrane. The protein resides in the early endosome membrane. It localises to the late endosome membrane. Its subcellular location is the recycling endosome membrane. It carries out the reaction L-tyrosyl-[protein] + ATP = O-phospho-L-tyrosyl-[protein] + ADP + H(+). With respect to regulation, the pro-survival signaling effect of NTRK1 in neurons requires its endocytosis into signaling early endosomes and its retrograde axonal transport. Functionally, receptor tyrosine kinase involved in the development and the maturation of the central and peripheral nervous systems through regulation of proliferation, differentiation and survival of sympathetic and nervous neurons. High affinity receptor for NGF which is its primary ligand, it can also bind and be activated by NTF3/neurotrophin-3. Upon dimeric NGF ligand-binding, undergoes homodimerization, autophosphorylation and activation. Recruits, phosphorylates and/or activates several downstream effectors that regulate distinct overlapping signaling cascades driving cell survival and differentiation. In absence of ligand and activation, may promote cell death, making the survival of neurons dependent on trophic factors. This chain is High affinity nerve growth factor receptor (NTRK1), found in Gallus gallus (Chicken).